A 568-amino-acid polypeptide reads, in one-letter code: CRISPR-associated exonuclease Cas4/endonuclease Cas1 fusion (568 aa).

The segment at 1 to 209 is CRISPR-associated exonuclease Cas4; it reads MSVVVTRYRG…KCSLAPVCLP (209 aa). Residue Cys43 participates in [4Fe-4S] cluster binding. Positions 95 and 108 each coordinate Mn(2+). Cys198, Cys201, and Cys207 together coordinate [4Fe-4S] cluster. The CRISPR-associated endonuclease Cas1 stretch occupies residues 232 to 568; it reads VLHVATPGTR…PGLFATFRLR (337 aa). Mn(2+) is bound by residues Glu390, His459, and Glu474.

In the N-terminal section; belongs to the CRISPR-associated exonuclease Cas4 family. The protein in the C-terminal section; belongs to the CRISPR-associated endonuclease Cas1 family. Homodimer, forms a heterotetramer with a Cas2 homodimer. It depends on [4Fe-4S] cluster as a cofactor. Requires Mg(2+) as cofactor. Mn(2+) is required as a cofactor.

It carries out the reaction exonucleolytic cleavage in the 5'- to 3'-direction to yield nucleoside 3'-phosphates.. In terms of biological role, CRISPR (clustered regularly interspaced short palindromic repeat), is an adaptive immune system that provides protection against mobile genetic elements (viruses, transposable elements and conjugative plasmids). CRISPR clusters contain spacers, sequences complementary to antecedent mobile elements, and target invading nucleic acids. CRISPR clusters are transcribed and processed into CRISPR RNA (crRNA). The Cas4 region acts as a ssDNA exonuclease, while the Cas1 region acts as a dsDNA endonuclease. Involved in the integration of spacer DNA into the CRISPR cassette. The sequence is that of CRISPR-associated exonuclease Cas4/endonuclease Cas1 fusion (cas4-cas1) from Myxococcus xanthus (strain DK1622).